The chain runs to 298 residues: tRNA dimethylallyltransferase (298 aa).

16–23 is a binding site for ATP; the sequence is GPTASGKS. Residue 18-23 participates in substrate binding; that stretch reads TASGKS. Interaction with substrate tRNA stretches follow at residues 41-44 and 165-169; these read DSMQ and QRIVR.

Belongs to the IPP transferase family. As to quaternary structure, monomer. Mg(2+) serves as cofactor.

It carries out the reaction adenosine(37) in tRNA + dimethylallyl diphosphate = N(6)-dimethylallyladenosine(37) in tRNA + diphosphate. Catalyzes the transfer of a dimethylallyl group onto the adenine at position 37 in tRNAs that read codons beginning with uridine, leading to the formation of N6-(dimethylallyl)adenosine (i(6)A). The polypeptide is tRNA dimethylallyltransferase (Rhizobium rhizogenes (strain K84 / ATCC BAA-868) (Agrobacterium radiobacter)).